Reading from the N-terminus, the 276-residue chain is Undecaprenyl-diphosphatase (276 aa).

A run of 6 helical transmembrane segments spans residues 43–63, 85–105, 109–129, 184–204, 218–238, and 254–274; these read RAMAFNIIIQLGAILAVVWEF, INLLIAFLPAVVLGVIFADLI, LFNPITVATALVVGGLIMLWA, ATEFSFFLAMPTMVGAAVYSG, VFAIGFVTAFVFAMIAVKGLL, and IAFGLLILATWQFGWVDWTAA.

It belongs to the UppP family.

It is found in the cell inner membrane. It catalyses the reaction di-trans,octa-cis-undecaprenyl diphosphate + H2O = di-trans,octa-cis-undecaprenyl phosphate + phosphate + H(+). Its function is as follows. Catalyzes the dephosphorylation of undecaprenyl diphosphate (UPP). Confers resistance to bacitracin. The polypeptide is Undecaprenyl-diphosphatase (Pseudomonas fluorescens (strain ATCC BAA-477 / NRRL B-23932 / Pf-5)).